The following is a 443-amino-acid chain: GTPase Der (443 aa).

EngA-type G domains follow at residues 3 to 167 (PTLV…PEPE) and 176 to 349 (VRVA…AAAM). Residues 9–16 (GRPNVGKS), 56–60 (DTGGF), 119–122 (NKAE), 182–189 (GRPNVGKS), 229–233 (DTAGM), and 294–297 (NKWD) contribute to the GTP site. A KH-like domain is found at 350-434 (AKMTTPRLTR…PLRIQFVTAK (85 aa)).

This sequence belongs to the TRAFAC class TrmE-Era-EngA-EngB-Septin-like GTPase superfamily. EngA (Der) GTPase family. As to quaternary structure, associates with the 50S ribosomal subunit.

Its function is as follows. GTPase that plays an essential role in the late steps of ribosome biogenesis. The polypeptide is GTPase Der (Dechloromonas aromatica (strain RCB)).